A 95-amino-acid polypeptide reads, in one-letter code: Aspartyl/glutamyl-tRNA(Asn/Gln) amidotransferase subunit C (95 aa).

It belongs to the GatC family. Heterotrimer of A, B and C subunits.

The enzyme catalyses L-glutamyl-tRNA(Gln) + L-glutamine + ATP + H2O = L-glutaminyl-tRNA(Gln) + L-glutamate + ADP + phosphate + H(+). The catalysed reaction is L-aspartyl-tRNA(Asn) + L-glutamine + ATP + H2O = L-asparaginyl-tRNA(Asn) + L-glutamate + ADP + phosphate + 2 H(+). In terms of biological role, allows the formation of correctly charged Asn-tRNA(Asn) or Gln-tRNA(Gln) through the transamidation of misacylated Asp-tRNA(Asn) or Glu-tRNA(Gln) in organisms which lack either or both of asparaginyl-tRNA or glutaminyl-tRNA synthetases. The reaction takes place in the presence of glutamine and ATP through an activated phospho-Asp-tRNA(Asn) or phospho-Glu-tRNA(Gln). This is Aspartyl/glutamyl-tRNA(Asn/Gln) amidotransferase subunit C from Rhizobium leguminosarum bv. trifolii (strain WSM2304).